The sequence spans 1486 residues: Chromosome partition protein MukB (1486 aa).

34-41 is a binding site for ATP; that stretch reads GGNGAGKS. Coiled-coil stretches lie at residues 326 to 418, 444 to 480, and 509 to 603; these read LEAD…QYNQ, LETF…QAYQ, and RHLA…RAPV. Positions 666-783 are flexible hinge; it reads PGGSEDQRLN…EVPLFGRAAR (118 aa). Coiled coils occupy residues 835-923, 977-1115, and 1209-1266; these read EAEI…AKLE, EMLS…TAKA, and VEAI…QNVS.

Belongs to the SMC family. MukB subfamily. Homodimerization via its hinge domain. Binds to DNA via its C-terminal region. Interacts, and probably forms a ternary complex, with MukE and MukF via its C-terminal region. The complex formation is stimulated by calcium or magnesium. Interacts with tubulin-related protein FtsZ.

The protein resides in the cytoplasm. It is found in the nucleoid. Plays a central role in chromosome condensation, segregation and cell cycle progression. Functions as a homodimer, which is essential for chromosome partition. Involved in negative DNA supercoiling in vivo, and by this means organize and compact chromosomes. May achieve or facilitate chromosome segregation by condensation DNA from both sides of a centrally located replisome during cell division. This Shigella boydii serotype 18 (strain CDC 3083-94 / BS512) protein is Chromosome partition protein MukB.